The following is a 400-amino-acid chain: Cytochrome b (400 aa).

The next 4 membrane-spanning stretches (helical) occupy residues 32–52, 76–98, 113–133, and 179–199; these read FGSL…TLAM, WLIR…LHIG, TWSI…LGYV, and FFSL…MHLI. Heme b contacts are provided by histidine 82 and histidine 96. Heme b-binding residues include histidine 183 and histidine 197. Residue histidine 202 coordinates a ubiquinone. The next 4 helical transmembrane spans lie at 226–246, 290–310, 322–342, and 349–369; these read YLFK…IFVF, AVGV…PYLD, LSKV…QLGA, and FIVF…IIIP.

Belongs to the cytochrome b family. As to quaternary structure, fungal cytochrome b-c1 complex contains 10 subunits; 3 respiratory subunits, 2 core proteins and 5 low-molecular weight proteins. Cytochrome b-c1 complex is a homodimer. Heme b is required as a cofactor.

It localises to the mitochondrion inner membrane. Its function is as follows. Component of the ubiquinol-cytochrome c reductase complex (complex III or cytochrome b-c1 complex) that is part of the mitochondrial respiratory chain. The b-c1 complex mediates electron transfer from ubiquinol to cytochrome c. Contributes to the generation of a proton gradient across the mitochondrial membrane that is then used for ATP synthesis. The protein is Cytochrome b (cob) of Epidermophyton floccosum.